The chain runs to 443 residues: Probable D-serine dehydratase (443 aa).

K116 carries the post-translational modification N6-(pyridoxal phosphate)lysine.

Belongs to the serine/threonine dehydratase family. DsdA subfamily. Pyridoxal 5'-phosphate is required as a cofactor.

The enzyme catalyses D-serine = pyruvate + NH4(+). The sequence is that of Probable D-serine dehydratase from Bacillus cereus (strain G9842).